The primary structure comprises 231 residues: NifU-like protein 1, chloroplastic (231 aa).

The transit peptide at methionine 1–leucine 69 directs the protein to the chloroplast.

This sequence belongs to the NifU family. In terms of assembly, homodimer; disulfide-linked. Predominantly expressed in floral stalks and siliques. Expressed in leaves, cauline leaves, flower stalks and flowers (at protein level).

The protein localises to the plastid. The protein resides in the chloroplast stroma. Molecular scaffold for [Fe-S] cluster assembly of chloroplastic iron-sulfur proteins. The chain is NifU-like protein 1, chloroplastic (NIFU1) from Arabidopsis thaliana (Mouse-ear cress).